A 61-amino-acid polypeptide reads, in one-letter code: Metallothionein-1A (61 aa).

An N-acetylmethionine modification is found at Met-1. The segment at 1-29 is beta; sequence MDPNCSCPTGGSCSCAGSCTCKACRCPSC. 18 residues coordinate a divalent metal cation: Cys-5, Cys-7, Cys-13, Cys-15, Cys-19, Cys-21, Cys-24, Cys-26, Cys-29, Cys-33, Cys-34, Cys-36, Cys-37, Cys-41, Cys-44, Cys-48, Cys-50, and Cys-57. The interval 30-61 is alpha; it reads KKSCCSCCPVGCAKCAQGCVCKGASDKCSCCA. Ser-58 bears the Phosphoserine mark. Cys-59 and Cys-60 together coordinate a divalent metal cation.

It belongs to the metallothionein superfamily. Type 1 family. As to quaternary structure, monomer.

In terms of biological role, metallothioneins have a high content of cysteine residues that bind various heavy metals; these proteins are transcriptionally regulated by both heavy metals and glucocorticoids. This Bos taurus (Bovine) protein is Metallothionein-1A (MT1A).